The sequence spans 303 residues: uncharacterized protein (303 aa).

The next 4 membrane-spanning stretches (helical) occupy residues 102–122, 132–152, 184–204, and 221–241; these read TYLLSIIMMVLLCMLPSVMAI, FVLFDDIFILITFILIPFLFF, LLYFFFLLLWVPQGFLQSLIY, and FILLGIDLIFILFAIWNFLLF.

It localises to the membrane. This is an uncharacterized protein from Dictyostelium discoideum (Social amoeba).